Here is a 590-residue protein sequence, read N- to C-terminus: Dystrobrevin-1 (590 aa).

Residues 1-10 show a composition bias toward gly residues; the sequence is MLWSNGGGGP. Residues 1–25 form a disordered region; sequence MLWSNGGGGPREPSSAPSPDHHRAM. The ZZ-type zinc-finger motif lies at 259 to 315; sequence YHPVVCDACQVRSFTGFRYKCQRCANYQLCQSCFWRGRTSQNHSNEHEMKEYSSYKS. Positions 264, 267, 279, 282, 288, 291, 301, and 305 each coordinate Zn(2+). Residues 434–508 are a coiled coil; it reads SMVGDERTLI…EHLMAQLNTG (75 aa). The segment at 468-590 is essential for interaction with ctn-1; it reads DGLAGLRDRK…DENGVTINGF (123 aa). The interval 484 to 490 is essential for interaction with dys-1; sequence MFEMQQR.

Belongs to the dystrophin family. Dystrobrevin subfamily. In terms of assembly, component of the dystrophin glycoprotein complex (DGC). Interacts with dystrophin (dys-1) and syntrophin (stn-1) to form the DGC. Interacts (via C-terminus) with ctn-1 (via N-terminus); the interaction is required for localization of the dystrophin complex and ctn-1 near dense bodies in muscle cells. As to expression, from late embryogenesis to adulthood, expressed in neurons and muscles; particularly strong in the ventral nerve cord and in muscles of the body wall, head pharyngeal, and vulva; weaker in the intestinal muscle (at protein level).

It localises to the cytoplasm. Plays a role in cholinergic transmission and as a functional partner of dystrophin (dys-1), necessary for muscle maintenance. Required for localization of ctn-1 near dense bodies in muscle cells. The protein is Dystrobrevin-1 of Caenorhabditis elegans.